A 474-amino-acid polypeptide reads, in one-letter code: Methylenetetrahydrofolate--tRNA-(uracil-5-)-methyltransferase TrmFO (474 aa).

9 to 14 (GGGLAG) serves as a coordination point for FAD.

The protein belongs to the MnmG family. TrmFO subfamily. The cofactor is FAD.

It localises to the cytoplasm. The enzyme catalyses uridine(54) in tRNA + (6R)-5,10-methylene-5,6,7,8-tetrahydrofolate + NADH + H(+) = 5-methyluridine(54) in tRNA + (6S)-5,6,7,8-tetrahydrofolate + NAD(+). It carries out the reaction uridine(54) in tRNA + (6R)-5,10-methylene-5,6,7,8-tetrahydrofolate + NADPH + H(+) = 5-methyluridine(54) in tRNA + (6S)-5,6,7,8-tetrahydrofolate + NADP(+). Functionally, catalyzes the folate-dependent formation of 5-methyl-uridine at position 54 (M-5-U54) in all tRNAs. This is Methylenetetrahydrofolate--tRNA-(uracil-5-)-methyltransferase TrmFO from Methylorubrum extorquens (strain PA1) (Methylobacterium extorquens).